A 301-amino-acid chain; its full sequence is Glycine cleavage system transcriptional activator homolog (301 aa).

The region spanning 10 to 67 is the HTH lysR-type domain; it reads PPLNSLKSFESAARYLSFTKAADELCVTQAAVSHQIKLLEXFLGIDLFKRKNRSLELT. Positions 27-46 form a DNA-binding region, H-T-H motif; that stretch reads FTKAADELCVTQAAVSHQIK.

Belongs to the LysR transcriptional regulatory family.

The protein localises to the cytoplasm. Functionally, not known, the gcv operon regulated by the E.coli homolog does not exist in H.influenzae, so it probably acts as a transcriptional regulator on some other operon. In Haemophilus influenzae (strain ATCC 51907 / DSM 11121 / KW20 / Rd), this protein is Glycine cleavage system transcriptional activator homolog (gcvA).